The primary structure comprises 150 residues: Deoxyuridine 5'-triphosphate nucleotidohydrolase (150 aa).

Residues 68 to 70, Asn-81, 85 to 87, and Lys-95 each bind substrate; these read RSG and TID.

Belongs to the dUTPase family. Requires Mg(2+) as cofactor.

The enzyme catalyses dUTP + H2O = dUMP + diphosphate + H(+). The protein operates within pyrimidine metabolism; dUMP biosynthesis; dUMP from dCTP (dUTP route): step 2/2. In terms of biological role, this enzyme is involved in nucleotide metabolism: it produces dUMP, the immediate precursor of thymidine nucleotides and it decreases the intracellular concentration of dUTP so that uracil cannot be incorporated into DNA. This is Deoxyuridine 5'-triphosphate nucleotidohydrolase from Rickettsia bellii (strain OSU 85-389).